Here is a 785-residue protein sequence, read N- to C-terminus: Phenylalanine--tRNA ligase beta subunit (785 aa).

The tRNA-binding domain occupies 39–148 (APAFSGVVIA…ADAPVGQSIR (110 aa)). The B5 domain maps to 399–474 (PKRQAVQLRA…RVYGYNNIPA (76 aa)). Mg(2+) is bound by residues D452, D458, E461, and E462. Residues 692-784 (SKFQPVRRDL…AASELGAQLR (93 aa)) enclose the FDX-ACB domain.

The protein belongs to the phenylalanyl-tRNA synthetase beta subunit family. Type 1 subfamily. In terms of assembly, tetramer of two alpha and two beta subunits. The cofactor is Mg(2+).

The protein resides in the cytoplasm. The catalysed reaction is tRNA(Phe) + L-phenylalanine + ATP = L-phenylalanyl-tRNA(Phe) + AMP + diphosphate + H(+). The sequence is that of Phenylalanine--tRNA ligase beta subunit from Chromobacterium violaceum (strain ATCC 12472 / DSM 30191 / JCM 1249 / CCUG 213 / NBRC 12614 / NCIMB 9131 / NCTC 9757 / MK).